The chain runs to 572 residues: Golgi apyrase (572 aa).

Residues 1-470 (MVRKYGIFID…KHWMRLFPNK (470 aa)) lie on the Lumenal side of the membrane. Glu145 acts as the Proton acceptor in catalysis. A helical transmembrane segment spans residues 471–491 (LFFILSFIFCLFFLFSLVLFG). Residues 492-572 (YDPKRRQRFK…RERTPRSPFP (81 aa)) are Cytoplasmic-facing.

It belongs to the GDA1/CD39 NTPase family. Ca(2+) serves as cofactor. The cofactor is Mg(2+). Mn(2+) is required as a cofactor.

Its subcellular location is the golgi apparatus. It is found in the membrane. It carries out the reaction a ribonucleoside 5'-triphosphate + 2 H2O = a ribonucleoside 5'-phosphate + 2 phosphate + 2 H(+). It functions in the pathway protein modification; protein glycosylation. Its function is as follows. Catalyzes the hydrolysis of phosphoanhydride bonds of nucleoside tri- and di-phosphates. Required for Golgi glycosylation and cell wall integrity. Involved in N-mannosylation of proteins in Golgi. The polypeptide is Golgi apyrase (Schizosaccharomyces pombe (strain 972 / ATCC 24843) (Fission yeast)).